The primary structure comprises 407 residues: Na(+)-translocating NADH-quinone reductase subunit F (407 aa).

The chain crosses the membrane as a helical span at residues Ile-6 to Val-26. The 93-residue stretch at Gly-35–Val-127 folds into the 2Fe-2S ferredoxin-type domain. The [2Fe-2S] cluster site is built by Cys-70, Cys-76, Cys-79, and Cys-111. The region spanning Val-130–Lys-269 is the FAD-binding FR-type domain. A catalytic region spans residues Glu-272–Met-389.

The protein belongs to the NqrF family. Composed of six subunits; NqrA, NqrB, NqrC, NqrD, NqrE and NqrF. [2Fe-2S] cluster is required as a cofactor. The cofactor is FAD.

The protein localises to the cell inner membrane. The catalysed reaction is a ubiquinone + n Na(+)(in) + NADH + H(+) = a ubiquinol + n Na(+)(out) + NAD(+). Functionally, NQR complex catalyzes the reduction of ubiquinone-1 to ubiquinol by two successive reactions, coupled with the transport of Na(+) ions from the cytoplasm to the periplasm. The first step is catalyzed by NqrF, which accepts electrons from NADH and reduces ubiquinone-1 to ubisemiquinone by a one-electron transfer pathway. The polypeptide is Na(+)-translocating NADH-quinone reductase subunit F (Pseudomonas aeruginosa (strain ATCC 15692 / DSM 22644 / CIP 104116 / JCM 14847 / LMG 12228 / 1C / PRS 101 / PAO1)).